The sequence spans 272 residues: Lyso-glycine lipid O-acyltransferase (272 aa).

The protein belongs to the O-acyltransferase GlsA family.

The enzyme catalyses a lyso-glycine lipid + a fatty acyl-[ACP] = a glycine lipid + holo-[ACP]. It catalyses the reaction N-[(3R)-3-hydroxyhexadecanoyl]-glycine + hexadecanoyl-[ACP] = N-[(3R)-3-(hexadecanoyloxy)hexadecanoyl]-glycine + holo-[ACP]. It functions in the pathway lipid metabolism. In terms of biological role, is involved in the production of glycine lipids (GL), which are phosphorus-free membrane lipids important for fitness during growth of the human gut bacterium B.thetaiotaomicron in vivo and in vitro. Catalyzes the second step of GL biosynthesis, i.e. the O-acylation of the hydroxyl group of lyso-glycine lipids, resulting in the production of the mature diacylated glycine lipids. This is Lyso-glycine lipid O-acyltransferase from Bacteroides thetaiotaomicron (strain ATCC 29148 / DSM 2079 / JCM 5827 / CCUG 10774 / NCTC 10582 / VPI-5482 / E50).